A 559-amino-acid chain; its full sequence is ATP-dependent RNA helicase HAS1 (559 aa).

The interval 1–90 (MAPRSQSKSQ…TSEAEADEPG (90 aa)) is disordered. Composition is skewed to basic and acidic residues over residues 9 to 22 (SQREPLRKRSREDA) and 55 to 75 (PDQKQKQKQSKDEKRLQELTK). A Q motif motif is present at residues 93–121 (YSFEKADFSEPTMKAIKEMGFQKMTKVQA). One can recognise a Helicase ATP-binding domain in the interval 124–300 (IPPLLAGRDV…RISLRPGPLY (177 aa)). An ATP-binding site is contributed by 137–144 (AKTGSGKT). A DEAD box motif is present at residues 247 to 250 (DEAD). The 171-residue stretch at 314–484 (GLEQGYVVCD…NVQSQLTKLI (171 aa)) folds into the Helicase C-terminal domain.

Belongs to the DEAD box helicase family. DDX18/HAS1 subfamily. Associates in the nucleolus with the 60S and pre-60S ribosomal subunits.

Its subcellular location is the nucleus. It localises to the nucleolus. It carries out the reaction ATP + H2O = ADP + phosphate + H(+). Its function is as follows. ATP-dependent RNA helicase involved in 40S ribosomal subunit biogenesis. Required for the processing and cleavage of 35S pre-rRNA at sites A0, A1, and A2, leading to mature 18S rRNA. This is ATP-dependent RNA helicase HAS1 (HAS1) from Lodderomyces elongisporus (strain ATCC 11503 / CBS 2605 / JCM 1781 / NBRC 1676 / NRRL YB-4239) (Yeast).